The chain runs to 347 residues: MLASVAGPVSLALVLLLCTRPATGQDCSAQCQCAAEAAPRCPAGVSLVLDGCGCCRVCAKQLGELCTERDPCDPHKGLFCDFGSPANRKIGVCTAKDGAPCVFGGSVYRSGESFQSSCKYQCTCLDGAVGCVPLCSMDVRLPSPDCPFPRRVKLPGKCCEEWVCDEPKDRTVVGPALAAYRLEDTFGPDPTMMRANCLVQTTEWSACSKTCGMGISTRVTNDNTFCRLEKQSRLCMVRPCEADLEENIKKGKKCIRTPKIAKPVKFELSGCTSVKTYRAKFCGVCTDGRCCTPHRTTTLPVEFKCPDGEIMKKNMMFIKTCACHYNCPGDNDIFESLYYRKMYGDMA.

A signal peptide spans 1–24 (MLASVAGPVSLALVLLLCTRPATG). Positions 25–96 (QDCSAQCQCA…NRKIGVCTAK (72 aa)) constitute an IGFBP N-terminal domain. Cystine bridges form between C27-C52, C31-C54, C33-C55, C41-C58, C66-C80, and C72-C93. The 67-residue stretch at 99–165 (APCVFGGSVY…GKCCEEWVCD (67 aa)) folds into the VWFC domain. One can recognise a TSP type-1 domain in the interval 196–241 (NCLVQTTEWSACSKTCGMGISTRVTNDNTFCRLEKQSRLCMVRPCE). The heparin-binding stretch occupies residues 245–347 (EENIKKGKKC…YYRKMYGDMA (103 aa)). Cystine bridges form between C254–C291, C271–C305, C282–C321, C285–C323, and C290–C327. The 75-residue stretch at 254-328 (CIRTPKIAKP…KTCACHYNCP (75 aa)) folds into the CTCK domain.

This sequence belongs to the CCN family. As to quaternary structure, monomer. Interacts with TSKU.

The protein resides in the secreted. Its subcellular location is the extracellular space. It is found in the extracellular matrix. In terms of biological role, major connective tissue mitoattractant secreted by vascular endothelial cells. Promotes proliferation and differentiation of chondrocytes. Is involved in the stimulation of osteoblast differentiation and has a critical role in osteogenesis. Mediates heparin- and divalent cation-dependent cell adhesion in many cell types including fibroblasts, myofibroblasts, endothelial and epithelial cells. Enhances fibroblast growth factor-induced DNA synthesis. In Rattus norvegicus (Rat), this protein is CCN family member 2.